Reading from the N-terminus, the 723-residue chain is Polyribonucleotide nucleotidyltransferase (723 aa).

Mg(2+)-binding residues include D488 and D494. Positions 555-614 (PKIITLNIKPEKIKDVIGPGGKQINAIIEETGVKIDIEQDGTVYIASQDQAMNRKAIAII) constitute a KH domain. An S1 motif domain is found at 624-692 (GEVYTGKVRR…HQGRVNLSRK (69 aa)). The tract at residues 692-723 (KALLEKKEQPEGDKKPQAEKKFYPKTKKPESK) is disordered. Over residues 693-723 (ALLEKKEQPEGDKKPQAEKKFYPKTKKPESK) the composition is skewed to basic and acidic residues.

The protein belongs to the polyribonucleotide nucleotidyltransferase family. Mg(2+) serves as cofactor.

Its subcellular location is the cytoplasm. The enzyme catalyses RNA(n+1) + phosphate = RNA(n) + a ribonucleoside 5'-diphosphate. Its function is as follows. Involved in mRNA degradation. Catalyzes the phosphorolysis of single-stranded polyribonucleotides processively in the 3'- to 5'-direction. The sequence is that of Polyribonucleotide nucleotidyltransferase from Listeria welshimeri serovar 6b (strain ATCC 35897 / DSM 20650 / CCUG 15529 / CIP 8149 / NCTC 11857 / SLCC 5334 / V8).